The following is a 539-amino-acid chain: MNEYGCNVCNEEYSARDPLKCPRVLTGCGHTICHNCAISIAGRNSSIFCPFDRTATQIPGGDLQNLKKNFALLELLEKIADGGGLLEKSGEVVKFDRYSKERLLNLECDEDSEHVAVIYCTVCDSNLCERCSESTHSTNVLSKHRRIPLTEKPPPLVHCRLHSSYVVEFVCKELSCDTESPLMCMMCRDYGRHKGHSHVLIEKEVEDLREKVREHLGELSKQSETIGNALHSIDSVIHELTPGQEDGSLEETRQEVRNHFRRLRTALDRDEEDAVETVDRYARNRVESLQTQKERLEAISSKIGNTCTTLQKALIMERGKILDRKDDLLALAESTAAEPTAVLDQSQLSTRIAFSFLNDRKLHIGDFIESRVVLLGLDGAGKTSIVRRLKKVQMDTVMAPHPTIGFNIETIHYKNYRLNFWDVGGLPKLRHLWKHYYSNAQAIFYVIDGYAVERFSEAIKELNRVMSDPLVGTCPVIVAVNRKDGYALNGHMDALLSQLEALPFQHHFHCCDAATGSGIDQIIDQITVCLSRLNGTCPV.

The segment at 6 to 53 (CNVCNEEYSARDPLKCPRVLTGCGHTICHNCAISIAGRNSSIFCPFDR) adopts an RING-type zinc-finger fold. The B box-type zinc-finger motif lies at 103–149 (LLNLECDEDSEHVAVIYCTVCDSNLCERCSESTHSTNVLSKHRRIPL). The ARF-like stretch occupies residues 369-539 (ESRVVLLGLD…LSRLNGTCPV (171 aa)). GTP contacts are provided by residues 376-383 (GLDGAGKT), 422-426 (DVGGL), and 481-484 (NRKD).

It in the C-terminal section; belongs to the small GTPase superfamily. Arf family.

The catalysed reaction is S-ubiquitinyl-[E2 ubiquitin-conjugating enzyme]-L-cysteine + [acceptor protein]-L-lysine = [E2 ubiquitin-conjugating enzyme]-L-cysteine + N(6)-ubiquitinyl-[acceptor protein]-L-lysine.. Its pathway is protein modification; protein ubiquitination. Functionally, acts as an E3 ubiquitin-protein ligase. This Caenorhabditis elegans protein is E3 ubiquitin-protein ligase arc-1 (arc-1).